Consider the following 108-residue polypeptide: Cytochrome c (108 aa).

Heme c is bound by residues C19, C22, H23, and M85.

It belongs to the cytochrome c family. In terms of processing, binds 1 heme c group covalently per subunit.

The protein resides in the mitochondrion intermembrane space. Electron carrier protein. The oxidized form of the cytochrome c heme group can accept an electron from the heme group of the cytochrome c1 subunit of cytochrome reductase. Cytochrome c then transfers this electron to the cytochrome oxidase complex, the final protein carrier in the mitochondrial electron-transport chain. The sequence is that of Cytochrome c from Stellaria longipes (Longstalk starwort).